A 1272-amino-acid polypeptide reads, in one-letter code: Ubiquitin carboxyl-terminal hydrolase 2 (1272 aa).

Residues 736–1258 (TGINNIGNTC…TPYFLVYVKQ (523 aa)) enclose the USP domain. The Nucleophile role is filled by cysteine 745. Residues 884 to 918 (DGLNGDVGTDANRKKNESNDAEVSENEDTTGLTSP) are disordered. Residues 902 to 911 (NDAEVSENED) are compositionally biased toward acidic residues. Serine 907 is modified (phosphoserine). Histidine 1209 functions as the Proton acceptor in the catalytic mechanism.

Belongs to the peptidase C19 family. Forms a ternary complex with RSP5 and RUP1. Interacts with RSP5. Interacts with FZO1.

It catalyses the reaction Thiol-dependent hydrolysis of ester, thioester, amide, peptide and isopeptide bonds formed by the C-terminal Gly of ubiquitin (a 76-residue protein attached to proteins as an intracellular targeting signal).. Its function is as follows. Has an ATP-independent isopeptidase activity, cleaving at the C-terminus of the ubiquitin moiety in natural or engineered linear fusion proteins, irrespective of their size or the presence of an N-terminal extension to ubiquitin. Hydrolyzes polyubiquitinated 'Lys-63' polyubiquitin chains in RPO21, producing mono-ubiquitinated RNA polymerase II. Removes ubiquitin chains that initiate proteolysis of FZO1 and inhibit mitochondrial fusion. This is Ubiquitin carboxyl-terminal hydrolase 2 (UBP2) from Saccharomyces cerevisiae (strain ATCC 204508 / S288c) (Baker's yeast).